Reading from the N-terminus, the 129-residue chain is Small ribosomal subunit protein uS11 (129 aa).

Belongs to the universal ribosomal protein uS11 family. Part of the 30S ribosomal subunit. Interacts with proteins S7 and S18. Binds to IF-3.

Functionally, located on the platform of the 30S subunit, it bridges several disparate RNA helices of the 16S rRNA. Forms part of the Shine-Dalgarno cleft in the 70S ribosome. The protein is Small ribosomal subunit protein uS11 of Erythrobacter litoralis (strain HTCC2594).